We begin with the raw amino-acid sequence, 468 residues long: MRFPAASVAVDSTPQLRLLQMKDSHETYSTVQLVHSPLPEKGPNSVLVDVPQQISRRKPTAEQSFVSGSDSSRSSTKSSSGSRPVMTTTADPNIVTAASTESVSSSPKWLPKKADTDDRVQRSRERNRIHARKTRQRKKEQMQSLEGRATDLKHEQIRLKQIINEKNTANILVGLFSKGQSQSPNEDPRVEALMYRSVEEIPDPSKIPELPALILPGQHASKKIKVAVPVVAASPQSMSDGGGEEVASTSDVSGDEQQVPDDGIDYDLLGKDRSKCTPEELDQIRRERNRMHAKRTRDRKRIFTEEMAEMCRILEEENHLLRVHLGGLDSDFKSESTTTSTHVVDRIDSVLSTPTLASCAPPQDMVSVSLSPSQLPSKPSTKEVAFNQLQTLLDVAGSFERQQREAERKVPQMCSISAASDTSTSDSSHHHRQRRCHKGDSDRPVKRQRYQVPRSITTTTSLAAPVGW.

Disordered stretches follow at residues 55–149 and 234–272; these read SRRK…EGRA and SPQS…LGKD. Low complexity-rich tracts occupy residues 64 to 82 and 95 to 106; these read SFVS…SSGS and VTAASTESVSSS. Basic and acidic residues predominate over residues 112–128; the sequence is KKADTDDRVQRSRERNR. A bZIP 1 domain is found at 117–165; that stretch reads DDRVQRSRERNRIHARKTRQRKKEQMQSLEGRATDLKHEQIRLKQIINE. The segment at 119–139 is basic motif 1; sequence RVQRSRERNRIHARKTRQRKK. Positions 129-138 are enriched in basic residues; that stretch reads IHARKTRQRK. The leucine-zipper 1 stretch occupies residues 145–159; the sequence is LEGRATDLKHEQIRL. The segment covering 247–256 has biased composition (polar residues); that stretch reads ASTSDVSGDE. The region spanning 279–333 is the bZIP 2 domain; the sequence is EELDQIRRERNRMHAKRTRDRKRIFTEEMAEMCRILEEENHLLRVHLGGLDSDFK. Residues 285–312 are basic motif 2; sequence RRERNRMHAKRTRDRKRIFTEEMAEMCR. The segment at 313-320 is leucine-zipper 2; it reads ILEEENHL. The tract at residues 400–468 is disordered; the sequence is ERQQREAERK…TTSLAAPVGW (69 aa). Basic and acidic residues predominate over residues 401–410; sequence RQQREAERKV. Low complexity predominate over residues 417-426; sequence SAASDTSTSD.

This sequence belongs to the bZIP family.

Its subcellular location is the nucleus. Its function is as follows. Transcriptional activator which binds to the C-box-like motif 5'-TGACGT-3' and A-box-like motif 5'-GTACGTA-3' of target promoters to positively regulate the expression of genes involved in the tricarboxylic acid (TCA) cycle in response to nitrogen starvation. May also regulate the TCA cycle during day-to-night transitions. In Phaeodactylum tricornutum (strain CCAP 1055/1), this protein is bZIP transcription factor 14.